Reading from the N-terminus, the 268-residue chain is Imidazole glycerol phosphate synthase subunit HisF (268 aa).

Residues aspartate 12 and aspartate 131 contribute to the active site.

This sequence belongs to the HisA/HisF family. Heterodimer of HisH and HisF.

It localises to the cytoplasm. The enzyme catalyses 5-[(5-phospho-1-deoxy-D-ribulos-1-ylimino)methylamino]-1-(5-phospho-beta-D-ribosyl)imidazole-4-carboxamide + L-glutamine = D-erythro-1-(imidazol-4-yl)glycerol 3-phosphate + 5-amino-1-(5-phospho-beta-D-ribosyl)imidazole-4-carboxamide + L-glutamate + H(+). It participates in amino-acid biosynthesis; L-histidine biosynthesis; L-histidine from 5-phospho-alpha-D-ribose 1-diphosphate: step 5/9. Functionally, IGPS catalyzes the conversion of PRFAR and glutamine to IGP, AICAR and glutamate. The HisF subunit catalyzes the cyclization activity that produces IGP and AICAR from PRFAR using the ammonia provided by the HisH subunit. This chain is Imidazole glycerol phosphate synthase subunit HisF, found in Methanocorpusculum labreanum (strain ATCC 43576 / DSM 4855 / Z).